The primary structure comprises 785 residues: Protein kintoun (785 aa).

Basic and acidic residues-rich tracts occupy residues 622–638 (EHNE…RDTS) and 662–679 (HNIE…KEPK). Disordered regions lie at residues 622–698 (EHNE…DSHL) and 719–749 (KSSV…ASSN). The segment covering 681–695 (TSCTAESTSGQQPND) has biased composition (polar residues). The span at 728–737 (SDLDEDDMPD) shows a compositional bias: acidic residues.

Belongs to the PIH1 family. Kintoun subfamily.

The protein resides in the cytoplasm. The protein localises to the dynein axonemal particle. Its function is as follows. Required for cytoplasmic pre-assembly of axonemal dyneins, thereby playing a central role in motility in cilia and flagella. Involved in pre-assembly of dynein arm complexes in the cytoplasm before intraflagellar transport loads them for the ciliary compartment. The protein is Protein kintoun of Xenopus tropicalis (Western clawed frog).